We begin with the raw amino-acid sequence, 404 residues long: AT-hook motif nuclear-localized protein 6 (404 aa).

The tract at residues Thr40 to Ser112 is disordered. Residues Pro45 to Ala55 show a composition bias toward pro residues. Low complexity predominate over residues Pro56–Thr70. A Bipartite nuclear localization signal motif is present at residues Lys76–Lys84. The a.T hook DNA-binding region spans Lys76–Asp88. Low complexity predominate over residues Pro98–Ser112. The 143-residue stretch at Gly157 to Gln299 folds into the PPC domain. Residues Ala365–Gly404 form a disordered region. The span at His382–Ser394 shows a compositional bias: acidic residues.

The protein resides in the nucleus. Transcription factor that specifically binds AT-rich DNA sequences related to the nuclear matrix attachment regions (MARs). This chain is AT-hook motif nuclear-localized protein 6, found in Arabidopsis thaliana (Mouse-ear cress).